The following is a 425-amino-acid chain: MSEDNNNGKEYILDADSELRFEIEQKDAKVFVTLISGFAELFGTELVKKKKYEFGIGAKVAIFTYQGCVLQVTGKMDVCYISKETPMIQYINCHAALEQFRTDAEEHDKRGPVILVVGPMDVGKSTLCRILLNYAVRVGRRPLYADLDVGQGAISIPGNIATILIERPASVEEGFAKTAPLVYHFGHKSPSGNSVLYNAVVSKMAEVTLQSLDANKRTKSSGIIVNTCGWVKGYGYKHLLHAARAYRARAIFVLDQERLYNDLLRDVPSNVHVVLLPKSGGVVERTKELRHESREQRIKEYFYGNMRTPFYPFSFEVKFQDLRLYKIGAPPLPDSCMPIGMKAEDNKKKVVAVTPTSSLLHHILTLSFAESTDENVIGTNVAGFCCVTEVDMERQSVMLLSPQPRPLPPNALLLWSELQFMDNHA.

ATP-binding positions include glutamate 18, lysine 59, and 121-126 (DVGKST).

This sequence belongs to the Clp1 family. Clp1 subfamily.

The protein localises to the nucleus. In terms of biological role, required for endonucleolytic cleavage during polyadenylation-dependent pre-mRNA 3'-end formation. This Drosophila mojavensis (Fruit fly) protein is Protein CLP1 homolog (cbc).